We begin with the raw amino-acid sequence, 356 residues long: Histidinol-phosphate aminotransferase (356 aa).

K208 carries the post-translational modification N6-(pyridoxal phosphate)lysine.

Belongs to the class-II pyridoxal-phosphate-dependent aminotransferase family. Histidinol-phosphate aminotransferase subfamily. In terms of assembly, homodimer. Pyridoxal 5'-phosphate serves as cofactor.

The enzyme catalyses L-histidinol phosphate + 2-oxoglutarate = 3-(imidazol-4-yl)-2-oxopropyl phosphate + L-glutamate. It participates in amino-acid biosynthesis; L-histidine biosynthesis; L-histidine from 5-phospho-alpha-D-ribose 1-diphosphate: step 7/9. The protein is Histidinol-phosphate aminotransferase of Lactococcus lactis subsp. cremoris (strain SK11).